Reading from the N-terminus, the 245-residue chain is MHIDILTLFPEMFHGVFQSSILNKAVERQQFTYDLVNFREYSKNKHQKVDDYPYGGGAGMVLTPQPIFDAVEAVKSKRNSKPRVILMCPQGETLTQQKSEELAKEDHLIFICGHYEGYDERIREHIVTDEISIGDYVLTGGELGSMVVVDSVVRLLPDVLGNQQSAPQDSFSTGLLEHPHYTRPADFRGYKVPEVLLSGNHANIDSWRRKQSLIRTWNRRRDLLDKIELTDEEKITLNTDTPDEV.

S-adenosyl-L-methionine contacts are provided by residues glycine 113 and 133–138 (IGDYVL).

It belongs to the RNA methyltransferase TrmD family. Homodimer.

Its subcellular location is the cytoplasm. The enzyme catalyses guanosine(37) in tRNA + S-adenosyl-L-methionine = N(1)-methylguanosine(37) in tRNA + S-adenosyl-L-homocysteine + H(+). In terms of biological role, specifically methylates guanosine-37 in various tRNAs. The polypeptide is tRNA (guanine-N(1)-)-methyltransferase (Oceanobacillus iheyensis (strain DSM 14371 / CIP 107618 / JCM 11309 / KCTC 3954 / HTE831)).